We begin with the raw amino-acid sequence, 522 residues long: Probable mannosyltransferase KTR5 (522 aa).

Residues 1 to 16 (MLLIRRTINAFLGCIH) are Cytoplasmic-facing. The helical; Signal-anchor for type II membrane protein transmembrane segment at 17–37 (CNLTATCILIAFVITMYVVLV) threads the bilayer. The tract at residues 38–82 (SEPASVDGTMGNFLPFSKMDLATKRDRPFYSNCVNTQDYLLNPSY) is stem region. At 38–522 (SEPASVDGTM…REDYLRQFGN (485 aa)) the chain is on the lumenal side. The segment at 83–522 (IKQNASFVML…REDYLRQFGN (440 aa)) is catalytic. N-linked (GlcNAc...) asparagine glycosylation occurs at asparagine 86. Glutamate 363 acts as the Nucleophile in catalysis.

The protein belongs to the glycosyltransferase 15 family.

The protein localises to the membrane. Possible glycosyltransferase that transfers an alpha-D-mannosyl residue from GDP-mannose into lipid-linked oligosaccharide, forming an alpha-(1-&gt;2)-D-mannosyl-D-mannose linkage. The polypeptide is Probable mannosyltransferase KTR5 (KTR5) (Saccharomyces cerevisiae (strain ATCC 204508 / S288c) (Baker's yeast)).